A 366-amino-acid polypeptide reads, in one-letter code: Phospho-N-acetylmuramoyl-pentapeptide-transferase (366 aa).

10 consecutive transmembrane segments (helical) span residues 27 to 47, 71 to 91, 93 to 113, 134 to 154, 174 to 194, 205 to 225, 245 to 265, 268 to 288, 294 to 314, and 343 to 363; these read AALF…INSL, TPTM…LLWA, LSNV…AIGF, LGIE…TALA, FMIN…VGAG, GLAI…AYLA, LAVV…FNAP, AIFM…TVAV, IVMA…IIQV, and QVVI…LSTL.

It belongs to the glycosyltransferase 4 family. MraY subfamily. The cofactor is Mg(2+).

The protein localises to the cell inner membrane. It catalyses the reaction UDP-N-acetyl-alpha-D-muramoyl-L-alanyl-gamma-D-glutamyl-meso-2,6-diaminopimeloyl-D-alanyl-D-alanine + di-trans,octa-cis-undecaprenyl phosphate = di-trans,octa-cis-undecaprenyl diphospho-N-acetyl-alpha-D-muramoyl-L-alanyl-D-glutamyl-meso-2,6-diaminopimeloyl-D-alanyl-D-alanine + UMP. It participates in cell wall biogenesis; peptidoglycan biosynthesis. In terms of biological role, catalyzes the initial step of the lipid cycle reactions in the biosynthesis of the cell wall peptidoglycan: transfers peptidoglycan precursor phospho-MurNAc-pentapeptide from UDP-MurNAc-pentapeptide onto the lipid carrier undecaprenyl phosphate, yielding undecaprenyl-pyrophosphoryl-MurNAc-pentapeptide, known as lipid I. This chain is Phospho-N-acetylmuramoyl-pentapeptide-transferase, found in Rhizobium leguminosarum bv. trifolii (strain WSM2304).